A 573-amino-acid chain; its full sequence is Ribosomal RNA-processing protein 9 (573 aa).

The segment at 1 to 63 (MSDVTQQKKR…FEGENPADKR (63 aa)) is disordered. N-acetylserine is present on Ser-2. Acidic residues predominate over residues 25–58 (DEEITDPSSNEDEQLEVSDEEDALESEEEFEGEN). A coiled-coil region spans residues 32-106 (SSNEDEQLEV…KERTIDEYNN (75 aa)). Phosphoserine is present on Ser-50. WD repeat units follow at residues 234–273 (GHYDEILTVAASPDGKYVVTGGRDRKLIVWSTESLSPVKV), 278–317 (DRRGEVLSLAFRKNSDQLYASCADFKIRTYSINQFSQLEI), 320–359 (GHHDIVEDISALAMERCVTVGARDRTAMLWKIPDETRLTF), 397–435 (FCEGSIDVVSMVDDFHFITGSDNGNICLWSLAKKKPIFT), 471–509 (QPFWITSLYAIPYSNVFISGSWSGSLKVWKISDNLRSFE), and 516–562 (GAKG…ARNG).

This sequence belongs to the WD repeat RRP9 family. Interacts with UTP25. Component of the ribosomal small subunit (SSU) processome composed of at least 40 protein subunits and snoRNA U3.

It is found in the nucleus. The protein resides in the nucleolus. Involved in nucleolar processing of pre-18S ribosomal RNA. Required for efficient pre-rRNA cleavage at sites A0, A1 and A2, and biosynthesis of 18S rRNA. The protein is Ribosomal RNA-processing protein 9 (RRP9) of Saccharomyces cerevisiae (strain ATCC 204508 / S288c) (Baker's yeast).